Consider the following 352-residue polypeptide: N-acetyl-gamma-glutamyl-phosphate reductase (352 aa).

Cys155 is an active-site residue.

This sequence belongs to the NAGSA dehydrogenase family. Type 1 subfamily.

It is found in the cytoplasm. The catalysed reaction is N-acetyl-L-glutamate 5-semialdehyde + phosphate + NADP(+) = N-acetyl-L-glutamyl 5-phosphate + NADPH + H(+). The protein operates within amino-acid biosynthesis; L-arginine biosynthesis; N(2)-acetyl-L-ornithine from L-glutamate: step 3/4. In terms of biological role, catalyzes the NADPH-dependent reduction of N-acetyl-5-glutamyl phosphate to yield N-acetyl-L-glutamate 5-semialdehyde. In Brachyspira hyodysenteriae (strain ATCC 49526 / WA1), this protein is N-acetyl-gamma-glutamyl-phosphate reductase.